A 366-amino-acid chain; its full sequence is Major outer membrane protein (366 aa).

The first 21 residues, 1–21, serve as a signal peptide directing secretion; it reads MKKTLLATAIAGAMAASGAQA.

Belongs to the Gram-negative porin family. Homotrimer.

It localises to the cell outer membrane. The chain is Major outer membrane protein from Halomonas elongata (strain ATCC 33173 / DSM 2581 / NBRC 15536 / NCIMB 2198 / 1H9).